Consider the following 258-residue polypeptide: Ribonuclease PH (258 aa).

Residues Arg-88 and Gly-126 to Arg-128 each bind phosphate.

Belongs to the RNase PH family. As to quaternary structure, homohexameric ring arranged as a trimer of dimers.

The enzyme catalyses tRNA(n+1) + phosphate = tRNA(n) + a ribonucleoside 5'-diphosphate. Phosphorolytic 3'-5' exoribonuclease that plays an important role in tRNA 3'-end maturation. Removes nucleotide residues following the 3'-CCA terminus of tRNAs; can also add nucleotides to the ends of RNA molecules by using nucleoside diphosphates as substrates, but this may not be physiologically important. Probably plays a role in initiation of 16S rRNA degradation (leading to ribosome degradation) during starvation. The polypeptide is Ribonuclease PH (Mycobacteroides abscessus (strain ATCC 19977 / DSM 44196 / CCUG 20993 / CIP 104536 / JCM 13569 / NCTC 13031 / TMC 1543 / L948) (Mycobacterium abscessus)).